Reading from the N-terminus, the 843-residue chain is Taste receptor type 1 member 2 (843 aa).

Residues 1 to 19 (MGPQARTLCLLSLLLHVLP) form the signal peptide. Topologically, residues 20 to 570 (KPGKLVENSD…TFLEWHEVPT (551 aa)) are extracellular. N-linked (GlcNAc...) asparagine glycans are attached at residues Asn87, Asn296, Asn316, Asn355, Asn372, Asn432, Asn484, Asn491, and Asn531. A helical transmembrane segment spans residues 571–591 (IVVAILAALGFFSTLAILFIF). The Cytoplasmic portion of the chain corresponds to 592 to 606 (WRHFQTPMVRSAGGP). The helical transmembrane segment at 607-627 (MCFLMLVPLLLAFGMVPVYVG) threads the bilayer. Topologically, residues 628–642 (PPTVFSCFCRQAFFT) are extracellular. A helical membrane pass occupies residues 643–663 (VCFSICLSCITVRSFQIVCVF). The Cytoplasmic portion of the chain corresponds to 664–682 (KMARRLPSAYSFWMRYHGP). The chain crosses the membrane as a helical span at residues 683–703 (YVFVAFITAIKVALVVGNMLA). Residues 704 to 731 (TTINPIGRTDPDDPNIMILSCHPNYRNG) lie on the Extracellular side of the membrane. A helical membrane pass occupies residues 732–752 (LLFNTSMDLLLSVLGFSFAYM). Over 753 to 764 (GKELPTNYNEAK) the chain is Cytoplasmic. Residues 765–785 (FITLSMTFSFTSSISLCTFMS) form a helical membrane-spanning segment. The Extracellular segment spans residues 786–789 (VHDG). A helical transmembrane segment spans residues 790 to 810 (VLVTIMDLLVTVLNFLAIGLG). Topologically, residues 811–843 (YFGPKCYMILFYPERNTSAYFNSMIQGYTMRKS) are cytoplasmic.

The protein belongs to the G-protein coupled receptor 3 family. TAS1R subfamily. In terms of assembly, forms heterodimers with TAS1R3. Abundantly expressed in circumvallate and foliate papillae.

The protein localises to the cell membrane. Functionally, putative taste receptor. TAS1R2/TAS1R3 recognizes diverse natural and synthetic sweeteners. This is Taste receptor type 1 member 2 (Tas1r2) from Rattus norvegicus (Rat).